The sequence spans 247 residues: uncharacterized protein (247 aa).

It localises to the mitochondrion. This is an uncharacterized protein from Schizosaccharomyces pombe (strain 972 / ATCC 24843) (Fission yeast).